The following is a 471-amino-acid chain: 4-aminobutyrate aminotransferase (471 aa).

Residue 135-136 (GA) participates in pyridoxal 5'-phosphate binding. Arginine 192 contacts substrate. N6-(pyridoxal phosphate)lysine is present on lysine 326. Threonine 351 is a pyridoxal 5'-phosphate binding site.

The protein belongs to the class-III pyridoxal-phosphate-dependent aminotransferase family. In terms of assembly, homodimer and homotetramer. The cofactor is pyridoxal 5'-phosphate.

It localises to the cytoplasm. The catalysed reaction is 4-aminobutanoate + 2-oxoglutarate = succinate semialdehyde + L-glutamate. Its function is as follows. Required for the degradation of gamma-aminobutyric acid (GABA), which is important for utilization of GABA as nitrogen source and for oxidative stress tolerance. Deaminates GABA to succinate semialdehyde, which in turn is converted to succinate by the succinate-semialdehyde dehydrogenase UGA2. Cannot transaminate beta-alanine (BAL). This Saccharomyces cerevisiae (strain ATCC 204508 / S288c) (Baker's yeast) protein is 4-aminobutyrate aminotransferase (UGA1).